Consider the following 366-residue polypeptide: Short-chain collagen C4 (366 aa).

Residues 1-14 (DTGPQGPQGVAGPP) show a composition bias toward low complexity. Triple-helical region stretches follow at residues 1–23 (DTGP…KGDK) and 40–210 (GPPG…NGAV). Positions 1 to 207 (DTGPQGPQGV…QGPQGAPGSN (207 aa)) are disordered. Over residues 28–45 (YPPPPTCPTCPAGPPGAP) the composition is skewed to pro residues. 2 stretches are compositionally biased toward low complexity: residues 75 to 90 (PGND…PGYD) and 99 to 110 (TGAPGPQGPKGD). Basic and acidic residues predominate over residues 138-149 (DGQDGAKGDKGD). Composition is skewed to low complexity over residues 150–168 (QGPA…QGPA) and 189–201 (QGPK…QGPQ).

The protein resides in the secreted. Its subcellular location is the extracellular space. It localises to the extracellular matrix. The protein is Short-chain collagen C4 of Ephydatia muelleri (Mueller's freshwater sponge).